A 91-amino-acid chain; its full sequence is Putative defensin-like protein 83 (91 aa).

An N-terminal signal peptide occupies residues 1–27 (MATNKFLSILLLSLMAFAAILLPMISG). 4 disulfides stabilise this stretch: cysteine 32-cysteine 71, cysteine 37-cysteine 57, cysteine 43-cysteine 69, and cysteine 47-cysteine 70.

This sequence belongs to the DEFL family.

The protein localises to the secreted. This chain is Putative defensin-like protein 83 (LCR46), found in Arabidopsis thaliana (Mouse-ear cress).